The chain runs to 227 residues: UPF0173 metal-dependent hydrolase Oter_4201 (227 aa).

It belongs to the UPF0173 family.

The chain is UPF0173 metal-dependent hydrolase Oter_4201 from Opitutus terrae (strain DSM 11246 / JCM 15787 / PB90-1).